We begin with the raw amino-acid sequence, 649 residues long: 1-deoxy-D-xylulose-5-phosphate synthase (649 aa).

Thiamine diphosphate contacts are provided by residues H84 and 125-127 (GHS). D156 lines the Mg(2+) pocket. Residues 157 to 158 (GS), N185, F292, and E385 each bind thiamine diphosphate. N185 is a Mg(2+) binding site.

The protein belongs to the transketolase family. DXPS subfamily. As to quaternary structure, homodimer. The cofactor is Mg(2+). Requires thiamine diphosphate as cofactor.

The catalysed reaction is D-glyceraldehyde 3-phosphate + pyruvate + H(+) = 1-deoxy-D-xylulose 5-phosphate + CO2. It functions in the pathway metabolic intermediate biosynthesis; 1-deoxy-D-xylulose 5-phosphate biosynthesis; 1-deoxy-D-xylulose 5-phosphate from D-glyceraldehyde 3-phosphate and pyruvate: step 1/1. Its function is as follows. Catalyzes the acyloin condensation reaction between C atoms 2 and 3 of pyruvate and glyceraldehyde 3-phosphate to yield 1-deoxy-D-xylulose-5-phosphate (DXP). The polypeptide is 1-deoxy-D-xylulose-5-phosphate synthase (Saccharophagus degradans (strain 2-40 / ATCC 43961 / DSM 17024)).